We begin with the raw amino-acid sequence, 378 residues long: Flagellin E (378 aa).

Coiled coils occupy residues 98–139 (QSAN…KLLN) and 311–339 (MQNR…IKDA).

The protein belongs to the bacterial flagellin family. As to quaternary structure, heteromer of multiple flagellin subunits including FlaA, FlaB, FlaC, FlaD and FlaE.

Its subcellular location is the secreted. The protein resides in the bacterial flagellum. In terms of biological role, flagellin is the subunit protein which polymerizes to form the filaments of bacterial flagella. FlaE is not essential for flagellar synthesis and motility. This Vibrio cholerae serotype O1 (strain ATCC 39541 / Classical Ogawa 395 / O395) protein is Flagellin E (flaE).